A 299-amino-acid chain; its full sequence is Acetaldehyde dehydrogenase 2 (299 aa).

The active-site Acyl-thioester intermediate is Cys130. Residues 161-169 (SVGPGTRKN) and Asn272 each bind NAD(+).

Belongs to the acetaldehyde dehydrogenase family.

The enzyme catalyses acetaldehyde + NAD(+) + CoA = acetyl-CoA + NADH + H(+). The chain is Acetaldehyde dehydrogenase 2 from Burkholderia lata (strain ATCC 17760 / DSM 23089 / LMG 22485 / NCIMB 9086 / R18194 / 383).